A 1803-amino-acid chain; its full sequence is Pyruvate dehydrogenase [NADP(+)], mitochondrial (1803 aa).

The transit peptide at Met1–Tyr37 directs the protein to the mitochondrion. 4Fe-4S ferredoxin-type domains follow at residues Phe747 to Leu776 and Phe802 to Ala831. The [4Fe-4S] cluster site is built by Cys756, Cys759, Cys762, Cys766, Cys811, Cys814, Cys817, and Cys821. In terms of domain architecture, Flavodoxin-like spans Val1248–Trp1391. Residues Lys1425–Asp1650 form the FAD-binding FR-type domain. FAD contacts are provided by residues Tyr1458–Glu1469 and Ile1585–Ala1595.

The protein in the N-terminal section; belongs to the pyruvate:ferredoxin/flavodoxin oxidoreductase family. As to quaternary structure, homodimer. FAD is required as a cofactor. Requires FMN as cofactor. The cofactor is thiamine diphosphate. It depends on iron-sulfur cluster as a cofactor.

The protein localises to the mitochondrion. The catalysed reaction is pyruvate + NADP(+) + CoA = acetyl-CoA + CO2 + NADPH. Functionally, pyruvate dehydrogenase [NADP(+)] is one of three enzymes participating in respiratory metabolism. The enzyme is also active with 2-oxobutyrate and oxaloacetate. The enzyme is oxygen sensitive. In Euglena gracilis, this protein is Pyruvate dehydrogenase [NADP(+)], mitochondrial (PNO).